Consider the following 464-residue polypeptide: Synaptosomal-associated protein 47 (464 aa).

The tract at residues 20-42 (GRLWDSSGVPQRQKRPGPWRTQT) is disordered. 2 t-SNARE coiled-coil homology domains span residues 154 to 216 (VADA…LTEL) and 401 to 463 (TSLP…MKRL).

Belongs to the SVAP1 family. Forms a complex containing SNAP47, VAMP2 and STX1A. Associates with the BLOC-1 complex. Interacts with BLOC1S6.

The protein localises to the endomembrane system. The protein resides in the cytoplasm. Its subcellular location is the perinuclear region. In terms of biological role, plays a role in intracellular membrane fusion. The sequence is that of Synaptosomal-associated protein 47 (SNAP47) from Homo sapiens (Human).